We begin with the raw amino-acid sequence, 268 residues long: F-actin-capping protein subunit alpha (268 aa).

The residue at position 2 (Ser2) is an N-acetylserine. The residue at position 17 (Ser17) is a Phosphoserine.

This sequence belongs to the F-actin-capping protein alpha subunit family. Component of the F-actin capping complex, composed of a heterodimer of an alpha and a beta subunit. Interacts with BSP1 (via C-terminus); leading to recruitment of the F-actin capping complex to actin cortical patches and the acomyosin contractile ring.

The protein localises to the cytoplasm. It localises to the cytoskeleton. It is found in the actin patch. Its function is as follows. F-actin-capping proteins bind in a Ca(2+)-independent manner to the fast growing ends of actin filaments (barbed end) thereby blocking the exchange of subunits at these ends. Unlike other capping proteins (such as gelsolin and severin), these proteins do not sever actin filaments. The chain is F-actin-capping protein subunit alpha (CAP1) from Saccharomyces cerevisiae (strain ATCC 204508 / S288c) (Baker's yeast).